A 739-amino-acid polypeptide reads, in one-letter code: Protein NPGR2 (739 aa).

Residues Glu32–Asn71 are disordered. Residues Gln33–Glu45 show a composition bias toward basic and acidic residues. Residues Asn53–Ser63 are compositionally biased toward polar residues. TPR repeat units lie at residues Glu90 to Thr127, Phe162 to Ser195, Thr215 to Leu248, Pro465 to Ser498, Leu500 to Trp533, Gly536 to Gln569, Leu592 to Ser625, Ser626 to His659, and His697 to Met733.

Interacts with calmodulin in a calcium-dependent manner. As to expression, expressed in pollen, flowers and fruits.

This is Protein NPGR2 from Arabidopsis thaliana (Mouse-ear cress).